Reading from the N-terminus, the 1027-residue chain is Fibril-forming collagen alpha chain (1027 aa).

A nonhelical region (N-terminal) region spans residues 1-12 (YRAGPRYIQAQV). A disordered region spans residues 1 to 1027 (YRAGPRYIQA…GPPGNSDYGA (1027 aa)). The tract at residues 13–1023 (GPIGPRGPPG…PGPPGPPGNS (1011 aa)) is triple-helical region. Positions 17 to 26 (PRGPPGPPGS) are enriched in pro residues. Residues Pro-21 and Pro-24 each carry the 4-hydroxyproline; partial modification. Residues Pro-27 and Pro-39 each carry the 4-hydroxyproline modification. The residue at position 53 (Pro-53) is a 3-hydroxyproline; partial. Residue Pro-54 is modified to 4-hydroxyproline. The span at 63-72 (SGDDGRDGEP) shows a compositional bias: basic and acidic residues. Pro-72 carries the 4-hydroxyproline; partial modification. Residues 73–91 (GPRGGIGPMGPRGAGGMPG) show a composition bias toward gly residues. Residues Pro-90 and Pro-93 each carry the 4-hydroxyproline modification. A 5-hydroxylysine mark is found at Lys-96 and Lys-108. O-linked (Gal...) hydroxylysine glycosylation is found at Lys-96 and Lys-108. 4-hydroxyproline; partial is present on residues Pro-123 and Pro-128. Pro-150 bears the 4-hydroxyproline mark. Pro-161 bears the 3-hydroxyproline; partial mark. The residue at position 162 (Pro-162) is a 4-hydroxyproline. Pro-164 is modified (3-hydroxyproline; partial). 4-hydroxyproline is present on residues Pro-165, Pro-174, Pro-177, and Pro-180. Residues 168–182 (IGSTGSPGFPGTPGS) are compositionally biased toward low complexity. Lys-183 and Lys-192 each carry 5-hydroxylysine. Lys-192 carries an O-linked (Gal...) hydroxylysine glycan. 4-hydroxyproline occurs at positions 207, 216, 219, 228, and 237. Residues 227–249 (EPGASGESGLPGPSGFPGPRGMP) show a composition bias toward low complexity. Pro-243 is subject to 4-hydroxyproline; partial. 4-hydroxyproline occurs at positions 249 and 255. Gly residues predominate over residues 259-268 (GAKGDGGPTG). 5-hydroxylysine is present on Lys-261. The O-linked (Gal...) hydroxylysine glycan is linked to Lys-261. Residues Pro-273 and Pro-276 each carry the 4-hydroxyproline; partial modification. Lys-279 carries the 5-hydroxylysine modification. O-linked (Gal...) hydroxylysine glycosylation occurs at Lys-279. Pro-285, Pro-291, and Pro-303 each carry 4-hydroxyproline; partial. A 4-hydroxyproline mark is found at Pro-306, Pro-312, Pro-321, Pro-327, and Pro-339. Lys-342 is modified (5-hydroxylysine). Pro-348 bears the 4-hydroxyproline; partial mark. Residue Lys-351 is modified to 5-hydroxylysine; partial. A 4-hydroxyproline mark is found at Pro-366, Pro-372, and Pro-375. Residues 380 to 396 (RPGKDGRPGIRGKDGKQ) are compositionally biased toward basic and acidic residues. Pro-381 is subject to 4-hydroxyproline; partial. Residue Pro-387 is modified to 4-hydroxyproline. Residues 398–420 (EQGPQGPQGLAGLQGRAGPPGAR) show a composition bias toward low complexity. 3-hydroxyproline; partial is present on Pro-416. 4 positions are modified to 4-hydroxyproline: Pro-417, Pro-423, Pro-429, and Pro-432. Residues 437-446 (EQGDAGKDGE) show a composition bias toward basic and acidic residues. Positions 447–480 (TGAAGPPGAAGPTGARGPPGPRGQQGFQGLAGAQ) are enriched in low complexity. Pro-453, Pro-465, and Pro-483 each carry 4-hydroxyproline. 4-hydroxyproline; partial occurs at positions 500, 503, and 506. The span at 502-511 (GPAGPGGERG) shows a compositional bias: gly residues. 4-hydroxyproline occurs at positions 513 and 525. Positions 527–543 (ERGATGPAGPTGSPGVA) are enriched in low complexity. 4-hydroxyproline; partial occurs at positions 533 and 536. Pro-540 is modified (4-hydroxyproline). Lys-546 carries the 5-hydroxylysine modification. Residue Pro-551 is modified to 3-hydroxyproline; partial. A 4-hydroxyproline mark is found at Pro-552 and Pro-561. A 5-hydroxylysine mark is found at Lys-567 and Lys-573. An O-linked (Gal...) hydroxylysine glycan is attached at Lys-573. Positions 575-599 (SRGDIGPRGKAGERGKDGERGERGE) are enriched in basic and acidic residues. The residue at position 603 (Pro-603) is a 4-hydroxyproline. At Lys-612 the chain carries 5-hydroxylysine. An O-linked (Gal...) hydroxylysine glycan is attached at Lys-612. Pro-621 is subject to 4-hydroxyproline; partial. Pro-627 carries the post-translational modification 4-hydroxyproline. Residues 635 to 644 (PAGSQGIQGQ) show a composition bias toward low complexity. Pro-645 is modified (4-hydroxyproline; partial). Pro-647 is subject to 3-hydroxyproline; partial. Pro-648 carries the post-translational modification 4-hydroxyproline. At Lys-657 the chain carries 5-hydroxylysine. O-linked (Gal...) hydroxylysine glycosylation occurs at Lys-657. Residues Pro-663, Pro-708, Pro-711, Pro-714, Pro-717, and Pro-723 each carry the 4-hydroxyproline modification. Residues 698–710 (ETGAQGEIGLPGS) show a composition bias toward low complexity. The span at 714–726 (PGLPGPSGQPGPS) shows a compositional bias: pro residues. At Lys-738 the chain carries 5-hydroxylysine. An O-linked (Gal...) hydroxylysine glycan is attached at Lys-738. 4-hydroxyproline is present on residues Pro-744 and Pro-759. The span at 750 to 771 (QGDRGSDGEPGRDGTKGERGED) shows a compositional bias: basic and acidic residues. Lys-765 bears the 5-hydroxylysine mark. The O-linked (Gal...) hydroxylysine glycan is linked to Lys-765. Residue Pro-773 is modified to 3-hydroxyproline; partial. Pro-774, Pro-783, and Pro-792 each carry 4-hydroxyproline. Residues 802 to 814 (GPMGGQGMKGDGG) are compositionally biased toward gly residues. At Lys-810 the chain carries 5-hydroxylysine. The O-linked (Gal...) hydroxylysine glycan is linked to Lys-810. Position 815 is a 3-hydroxyproline; partial (Pro-815). Residues Pro-816, Pro-843, Pro-849, Pro-855, Pro-861, Pro-867, Pro-888, Pro-894, Pro-903, and Pro-915 each carry the 4-hydroxyproline modification. A compositionally biased stretch (low complexity) spans 828-848 (AGPQGPTGPSGQAGAPGQEGA). Residues 884 to 894 (QRGLPGAAGPP) are compositionally biased toward low complexity. Residues 911–927 (PVGAPGSQGPAGIMGMK) are compositionally biased toward low complexity. Lys-927 bears the 5-hydroxylysine mark. Lys-927 carries O-linked (Gal...) hydroxylysine glycosylation. Position 933 is a 5-hydroxylysine; partial (Lys-933). A 5-hydroxylysine mark is found at Lys-936 and Lys-939. Lys-936 carries an O-linked (Gal...) hydroxylysine glycan. The span at 942 to 962 (TGLPGLQGLQGTPGHSGESGP) shows a compositional bias: low complexity. Pro-945 is subject to 4-hydroxyproline. Pro-954 carries the post-translational modification 4-hydroxyproline; partial. A 4-hydroxyproline mark is found at Pro-963 and Pro-966. Residues 973–982 (GEAGGRGSQG) show a composition bias toward gly residues. Low complexity predominate over residues 983 to 1001 (PPGKDGQPGPSGRVGPRGP). 4-hydroxyproline is present on residues Pro-984 and Pro-990. Pro-1010 is subject to 3-hydroxyproline; partial. Over residues 1010–1020 (PPGPPGPPGPP) the composition is skewed to pro residues. A 4-hydroxyproline modification is found at Pro-1011. Pro-1013 carries the 3-hydroxyproline; partial modification. Pro-1014 is modified (4-hydroxyproline). Pro-1016 is subject to 3-hydroxyproline; partial. Pro-1017 carries the 4-hydroxyproline modification. Position 1019 is a 3-hydroxyproline; partial (Pro-1019). Pro-1020 is subject to 4-hydroxyproline. Positions 1024–1027 (DYGA) are nonhelical region (C-terminal).

Homotetramer.

It localises to the secreted. It is found in the extracellular space. The protein resides in the extracellular matrix. Fibril-forming collagen. This is Fibril-forming collagen alpha chain from Riftia pachyptila (Vent tube worm).